Here is a 258-residue protein sequence, read N- to C-terminus: Phosphate import ATP-binding protein PstB (258 aa).

The 242-residue stretch at Ile-12–Ile-253 folds into the ABC transporter domain. Gly-44–Ser-51 is a binding site for ATP.

The protein belongs to the ABC transporter superfamily. Phosphate importer (TC 3.A.1.7) family. As to quaternary structure, the complex is composed of two ATP-binding proteins (PstB), two transmembrane proteins (PstC and PstA) and a solute-binding protein (PstS).

It is found in the cell inner membrane. It catalyses the reaction phosphate(out) + ATP + H2O = ADP + 2 phosphate(in) + H(+). Its function is as follows. Part of the ABC transporter complex PstSACB involved in phosphate import. Responsible for energy coupling to the transport system. In Photorhabdus laumondii subsp. laumondii (strain DSM 15139 / CIP 105565 / TT01) (Photorhabdus luminescens subsp. laumondii), this protein is Phosphate import ATP-binding protein PstB.